The chain runs to 912 residues: Probable dipeptidyl-aminopeptidase B (912 aa).

The tract at residues 1–74 (MSSALSPEGD…GPFLGPGASL (74 aa)) is disordered. Residues 1–85 (MSSALSPEGD…REPMDRGLRR (85 aa)) are Cytoplasmic-facing. The span at 16-27 (DSLSSVSTTSLV) shows a compositional bias: low complexity. Over residues 30–50 (RIQEKTEMDADNDKEKDPRAL) the composition is skewed to basic and acidic residues. A compositionally biased stretch (acidic residues) spans 51-63 (DDEDPLRDEDDLE). The helical; Signal-anchor for type II membrane protein transmembrane segment at 86–106 (ILIIVAVVFIGGWLAGLGIFI) threads the bilayer. The Vacuolar portion of the chain corresponds to 107–912 (ASGSYHHESD…KRHMVPQALV (806 aa)). The N-linked (GlcNAc...) asparagine glycan is linked to Asn-344. Catalysis depends on Ser-749, which acts as the Charge relay system. N-linked (GlcNAc...) asparagine glycosylation is present at Asn-808. Catalysis depends on charge relay system residues Asp-826 and His-859. The interval 892 to 912 (PQPQKDPVEKEKRHMVPQALV) is disordered.

It belongs to the peptidase S9B family.

Its subcellular location is the vacuole membrane. It catalyses the reaction Release of an N-terminal dipeptide, Xaa-Yaa-|-Zaa-, from a polypeptide, preferentially when Yaa is Pro, provided Zaa is neither Pro nor hydroxyproline.. In terms of biological role, type IV dipeptidyl-peptidase which removes N-terminal dipeptides sequentially from polypeptides having unsubstituted N-termini provided that the penultimate residue is proline. In Fusarium vanettenii (strain ATCC MYA-4622 / CBS 123669 / FGSC 9596 / NRRL 45880 / 77-13-4) (Fusarium solani subsp. pisi), this protein is Probable dipeptidyl-aminopeptidase B (DAPB).